A 260-amino-acid polypeptide reads, in one-letter code: Vesicle-associated membrane protein/synaptobrevin-binding protein (260 aa).

Residues 1 to 238 (MASHEQALIL…SPAPAAAVRA (238 aa)) lie on the Cytoplasmic side of the membrane. Residues 7-125 (ALILEPAGEL…MDTKLRCVFE (119 aa)) enclose the MSP domain. Residues 127 to 177 (PDGSHQAPASDASRATDAGAHFSESALEDPTVASRKTETQSPKRVGAVGSA) are disordered. Residues 172–216 (GAVGSAGEDVKKLQHELKKAQSEITSLKGENSQLKDEGIRLRKVA) are a coiled coil. The helical; Anchor for type IV membrane protein transmembrane segment at 239–259 (FPPVVYVVAAIILGLIIGKFL) threads the bilayer.

The protein belongs to the VAMP-associated protein (VAP) (TC 9.B.17) family. In terms of tissue distribution, detected only in the central nervous system and the gill of aplysia.

Its subcellular location is the membrane. It is found in the synapse. The protein resides in the synaptosome. Its function is as follows. Required for neurotransmitter release. Interacts with VAMP. The protein is Vesicle-associated membrane protein/synaptobrevin-binding protein of Aplysia californica (California sea hare).